A 509-amino-acid chain; its full sequence is Scavenger receptor class B member 1 (509 aa).

Topologically, residues 1–11 are cytoplasmic; the sequence is MGNLSRARRVT. The chain crosses the membrane as a helical span at residues 12-32; that stretch reads AALGFIGLLFAVLGIIMIVMV. The Extracellular segment spans residues 33-440; sequence PSIIKQQVLK…YIQLVLMPKV (408 aa). N-linked (GlcNAc...) asparagine glycosylation is found at Asn-102, Asn-108, Asn-173, Asn-212, Asn-227, Asn-255, Asn-310, Asn-330, and Asn-383. Cys-251 and Cys-384 form a disulfide bridge. Residues 441–461 form a helical membrane-spanning segment; it reads LHYAQYVLLALGCVLLLIPII. The Cytoplasmic segment spans residues 462 to 509; sequence YQIRSQEKCYLFWISFKKGSKDKEAVQAYSEFLMTSAPKGTVLQEARL.

The protein belongs to the CD36 family. In terms of processing, N-glycosylated. Post-translationally, the six cysteines of the extracellular domain are all involved in intramolecular disulfide bonds.

The protein resides in the cell membrane. It is found in the membrane. The protein localises to the caveola. Functionally, receptor for different ligands such as phospholipids, cholesterol ester, lipoproteins, phosphatidylserine and apoptotic cells. Receptor for HDL, mediating selective uptake of cholesteryl ether and HDL-dependent cholesterol efflux. Also facilitates the flux of free and esterified cholesterol between the cell surface and apoB-containing lipoproteins and modified lipoproteins, although less efficiently than HDL. May be involved in the phagocytosis of apoptotic cells, via its phosphatidylserine binding activity. The sequence is that of Scavenger receptor class B member 1 (SCARB1) from Bos taurus (Bovine).